The sequence spans 1330 residues: pre-mRNA 3' end processing protein WDR33 (1330 aa).

Ala-2 carries the post-translational modification N-acetylalanine. The residue at position 7 (Ser-7) is a Phosphoserine. An N6-acetyllysine modification is found at Lys-46. 7 WD repeats span residues 117–156 (KVKC…FETI), 159–198 (AHDS…VKMF), 200–239 (AHKE…EERI), 242–283 (GHGA…SLAT), 286–325 (AHKN…EELQ), 329–369 (GHKK…EVGG), and 373–412 (AHEG…DKMR). Residues Lys-526, Lys-530, and Lys-560 each participate in a glycyl lysine isopeptide (Lys-Gly) (interchain with G-Cter in SUMO2) cross-link. The segment at 566–1330 (QKQADQIQPP…GTSRGSGRGR (765 aa)) is disordered. Positions 588-607 (FSGQGPISQIPQGFQQPHPS) are enriched in polar residues. The Collagen-like domain maps to 617-769 (GPPGPQGQFR…GPASQGIQGP (153 aa)). The segment covering 622–642 (QGQFRAPGPQGQMGPQGPPMH) has biased composition (low complexity). The segment covering 682-694 (PHGPLGPQGPPGP) has biased composition (pro residues). Composition is skewed to low complexity over residues 695 to 706 (QGSSGPQGHMGP) and 725 to 750 (QGHM…GMQG). The residue at position 776 (Arg-776) is an Omega-N-methylarginine. Low complexity predominate over residues 848 to 863 (GPSGSQGQQGPPQGSL). Arg-909 is modified (asymmetric dimethylarginine). The segment covering 926–935 (PGLGQQGAQG) has biased composition (low complexity). Basic and acidic residues-rich tracts occupy residues 965-983 (SERR…DRGP) and 992-1027 (GPPD…EFEG). Arg-981 is subject to Omega-N-methylarginine. Position 1028 is an omega-N-methylarginine (Arg-1028). Basic and acidic residues-rich tracts occupy residues 1049–1061 (PDHR…DGRG) and 1071–1115 (EGRR…RGRD). Residues 1123–1133 (FGPEEGFDASD) show a composition bias toward acidic residues. Composition is skewed to basic and acidic residues over residues 1134 to 1143 (EAARGRDLRG), 1163 to 1211 (EFPR…RERS), and 1236 to 1253 (SEHR…DRGS). Ser-1204 carries the phosphoserine modification. At Arg-1256 the chain carries Omega-N-methylarginine. Positions 1275–1287 (DGDHHDGYHRDEP) are enriched in basic and acidic residues. The span at 1293–1323 (GSSSSSRGARSGSNWGRGSNMNSGPPRRGTS) shows a compositional bias: low complexity. Position 1309 is an asymmetric dimethylarginine; alternate (Arg-1309). Residue Arg-1309 is modified to Omega-N-methylarginine; alternate.

It belongs to the WD repeat WDR33 family. As to quaternary structure, component of the cleavage and polyadenylation specificity factor (CPSF) module of the pre-mRNA 3'-end processing complex. Interacts with CPSF3/CPSF73. In terms of tissue distribution, most highly expressed in testis.

It localises to the nucleus. Essential for both cleavage and polyadenylation of pre-mRNA 3' ends. This Mus musculus (Mouse) protein is pre-mRNA 3' end processing protein WDR33 (Wdr33).